The following is a 233-amino-acid chain: Biosynthetic peptidoglycan transglycosylase (233 aa).

A helical transmembrane segment spans residues 17–37; the sequence is IVLAVLALVVLPYVLIFFYLL.

Belongs to the glycosyltransferase 51 family.

The protein resides in the cell inner membrane. The catalysed reaction is [GlcNAc-(1-&gt;4)-Mur2Ac(oyl-L-Ala-gamma-D-Glu-L-Lys-D-Ala-D-Ala)](n)-di-trans,octa-cis-undecaprenyl diphosphate + beta-D-GlcNAc-(1-&gt;4)-Mur2Ac(oyl-L-Ala-gamma-D-Glu-L-Lys-D-Ala-D-Ala)-di-trans,octa-cis-undecaprenyl diphosphate = [GlcNAc-(1-&gt;4)-Mur2Ac(oyl-L-Ala-gamma-D-Glu-L-Lys-D-Ala-D-Ala)](n+1)-di-trans,octa-cis-undecaprenyl diphosphate + di-trans,octa-cis-undecaprenyl diphosphate + H(+). It participates in cell wall biogenesis; peptidoglycan biosynthesis. Its function is as follows. Peptidoglycan polymerase that catalyzes glycan chain elongation from lipid-linked precursors. The protein is Biosynthetic peptidoglycan transglycosylase of Rhizobium etli (strain ATCC 51251 / DSM 11541 / JCM 21823 / NBRC 15573 / CFN 42).